Reading from the N-terminus, the 652-residue chain is MEKRIRELTSLLNQYRQEYYTNDNPSVSDQEYDKLYHELIDLEKEYPEYIQKDSPSQAVGGLILSGFEKYQHPFPLYSLQDAFSKEELEAFDRRVKSEFPKAEYIAELKIDGLSISLSYESGRLVTGATRGDGSVGENITENIKKIKDIPHQLKDDITITVRGEAYMSRSSFQKINLERQENGETEFANPRNAAAGTLRQLDTSIVARRELASFLYQEASPSQAQNQEDVLENLEALGFSVNKKRLISSSMEDIWSFITQVEDERDNLSYDIDGIVIKVNNLAMQEELGFTIKAPRWAIAYKFPAEEKEAEILSVDWTIGRTGVVTPTANLTPIQLAGTTVSRATLHNVDYIAEKDIRIGDTVIVYKAGDIIPAVLRVVDTKRDQQLPMPIPKVCPSCQSDLVHLEAEVALRCINPLCPSLIQRSLEHFASRNAMNIAGLGPAIVEKLFSAQLIHDVADIYQLSLDSLLTLEGIKEKSAQKLLDAIQSSKSNSADKLLFGLGIRHVGAKASRLLLETFGSVENLMKADDQSIAQIDGLGHVIANSIKNYFAKEEAKQLIFELKDKGVNLDYLGKKVDTSAQLFGLTVVLTGKLEEMTRQEAKEKLENMGAKVTGSVSKKTDLVIAGSDAGSKLDKARSLGIDVKDENWLLQL.

NAD(+) contacts are provided by residues 29–33, 78–79, and glutamate 107; these read DQEYD and SL. Lysine 109 acts as the N6-AMP-lysine intermediate in catalysis. 4 residues coordinate NAD(+): arginine 130, glutamate 164, lysine 278, and lysine 302. Zn(2+) is bound by residues cysteine 395, cysteine 398, cysteine 413, and cysteine 418. Positions 577–652 constitute a BRCT domain; that stretch reads DTSAQLFGLT…VKDENWLLQL (76 aa).

This sequence belongs to the NAD-dependent DNA ligase family. LigA subfamily. Requires Mg(2+) as cofactor. It depends on Mn(2+) as a cofactor.

The enzyme catalyses NAD(+) + (deoxyribonucleotide)n-3'-hydroxyl + 5'-phospho-(deoxyribonucleotide)m = (deoxyribonucleotide)n+m + AMP + beta-nicotinamide D-nucleotide.. Functionally, DNA ligase that catalyzes the formation of phosphodiester linkages between 5'-phosphoryl and 3'-hydroxyl groups in double-stranded DNA using NAD as a coenzyme and as the energy source for the reaction. It is essential for DNA replication and repair of damaged DNA. This chain is DNA ligase, found in Streptococcus uberis (strain ATCC BAA-854 / 0140J).